Consider the following 274-residue polypeptide: TIP41-like protein (274 aa).

Belongs to the TIP41 family.

This chain is TIP41-like protein (tiprl), found in Dictyostelium discoideum (Social amoeba).